A 108-amino-acid polypeptide reads, in one-letter code: Probable chaperone-like protein YdbL (108 aa).

Residues 1–21 (MKKTLLLCAFLVGLVSSNVMA) form the signal peptide.

It localises to the periplasm. Functionally, probably acts as a chaperone-like protein that contributes to, but is not required for, the formation of the YdbH-YnbE intermembrane bridge. Affects the function and the structure of the YdbH-YnbE complex. Overexpression of ydbL causes a negative effect on YdbH-YnbE function. In Escherichia coli (strain K12), this protein is Probable chaperone-like protein YdbL (ydbL).